The sequence spans 227 residues: MAYPFQLGLQDATSPIMEELTNFHDHTLMIVFLISSLVLYIISLMLTTKLTHTSTMDAQEVETIWTILPAVILILIALPSLRILYMMDEINNPVLTVKTMGHQWYWSYEYTDYEDLCFDSYMIPTNDLKPGELRLLEVDNRVVLPMELPIRMLISSEDVLHSWAVPSLGLKTDAIPGRLNQATVTSNRPGLFYGQCSEICGSNHSFMPIVLEMVPLKYFENWSASMI.

Topologically, residues 1–14 (MAYPFQLGLQDATS) are mitochondrial intermembrane. A helical transmembrane segment spans residues 15-45 (PIMEELTNFHDHTLMIVFLISSLVLYIISLM). Residues 46–59 (LTTKLTHTSTMDAQ) lie on the Mitochondrial matrix side of the membrane. Residues 60 to 87 (EVETIWTILPAVILILIALPSLRILYMM) traverse the membrane as a helical segment. Residues 88–227 (DEINNPVLTV…YFENWSASMI (140 aa)) are Mitochondrial intermembrane-facing. Cu cation is bound by residues H161, C196, E198, C200, H204, and M207. A Mg(2+)-binding site is contributed by E198. The residue at position 218 (Y218) is a Phosphotyrosine.

It belongs to the cytochrome c oxidase subunit 2 family. As to quaternary structure, component of the cytochrome c oxidase (complex IV, CIV), a multisubunit enzyme composed of 14 subunits. The complex is composed of a catalytic core of 3 subunits MT-CO1, MT-CO2 and MT-CO3, encoded in the mitochondrial DNA, and 11 supernumerary subunits COX4I, COX5A, COX5B, COX6A, COX6B, COX6C, COX7A, COX7B, COX7C, COX8 and NDUFA4, which are encoded in the nuclear genome. The complex exists as a monomer or a dimer and forms supercomplexes (SCs) in the inner mitochondrial membrane with NADH-ubiquinone oxidoreductase (complex I, CI) and ubiquinol-cytochrome c oxidoreductase (cytochrome b-c1 complex, complex III, CIII), resulting in different assemblies (supercomplex SCI(1)III(2)IV(1) and megacomplex MCI(2)III(2)IV(2)). Found in a complex with TMEM177, COA6, COX18, COX20, SCO1 and SCO2. Interacts with TMEM177 in a COX20-dependent manner. Interacts with COX20. Interacts with COX16. Cu cation is required as a cofactor.

It is found in the mitochondrion inner membrane. It carries out the reaction 4 Fe(II)-[cytochrome c] + O2 + 8 H(+)(in) = 4 Fe(III)-[cytochrome c] + 2 H2O + 4 H(+)(out). Functionally, component of the cytochrome c oxidase, the last enzyme in the mitochondrial electron transport chain which drives oxidative phosphorylation. The respiratory chain contains 3 multisubunit complexes succinate dehydrogenase (complex II, CII), ubiquinol-cytochrome c oxidoreductase (cytochrome b-c1 complex, complex III, CIII) and cytochrome c oxidase (complex IV, CIV), that cooperate to transfer electrons derived from NADH and succinate to molecular oxygen, creating an electrochemical gradient over the inner membrane that drives transmembrane transport and the ATP synthase. Cytochrome c oxidase is the component of the respiratory chain that catalyzes the reduction of oxygen to water. Electrons originating from reduced cytochrome c in the intermembrane space (IMS) are transferred via the dinuclear copper A center (CU(A)) of subunit 2 and heme A of subunit 1 to the active site in subunit 1, a binuclear center (BNC) formed by heme A3 and copper B (CU(B)). The BNC reduces molecular oxygen to 2 water molecules using 4 electrons from cytochrome c in the IMS and 4 protons from the mitochondrial matrix. This is Cytochrome c oxidase subunit 2 from Rattus norvegicus (Rat).